The chain runs to 84 residues: Mitochondrial import inner membrane translocase subunit Tim9 (84 aa).

A Twin CX3C motif motif is present at residues 36–60 (CFQSCITNFRIRKLDDEEQLCVYKC). 2 disulfides stabilise this stretch: Cys-36–Cys-60 and Cys-40–Cys-56.

This sequence belongs to the small Tim family. Heterohexamer; composed of 3 copies of timm9 and 3 copies of timm10, named soluble 70 kDa complex. Associates directly with the TIM22 complex, whose core is composed of timm22. Interacts with the transmembrane regions of multi-pass transmembrane proteins in transit.

The protein localises to the mitochondrion inner membrane. In terms of biological role, component of the TIM22 complex, a complex that mediates the import and insertion of multi-pass transmembrane proteins into the mitochondrial inner membrane. The TIM22 complex forms a twin-pore translocase that uses the membrane potential as external driving force. This chain is Mitochondrial import inner membrane translocase subunit Tim9 (timm9), found in Dictyostelium discoideum (Social amoeba).